The chain runs to 359 residues: Mineralocorticoid receptor (359 aa).

The segment at residues 1–49 is a DNA-binding region (nuclear receptor); the sequence is FKRAVEGQHNYLCAGRNDCIIDKIRRKNCPACRVRKCLQAGMNLGARKS. Cys13, Cys19, Cys29, and Cys32 together coordinate Zn(2+). Residues 13–37 form an NR C4-type zinc finger; that stretch reads CAGRNDCIIDKIRRKNCPACRVRKC. Positions 48–96 are disordered; that stretch reads KSKKPGKLKGVNEDSTPTKEGGQTCPGSGGGYLSSGEKELSTSPTNALV. Residues 50 to 107 are hinge; sequence KKPGKLKGVNEDSTPTKEGGQTCPGSGGGYLSSGEKELSTSPTNALVPHGPGGGLVTP. The 232-residue stretch at 108-339 folds into the NR LBD domain; sequence YLPPSICSVL…EFPEMLVEII (232 aa). Asn145 and Gln151 together coordinate 21-hydroxyprogesterone. Aldosterone-binding residues include Asn145 and Gln151. The progesterone site is built by Asn145 and Gln151. Residues 157 to 160 form an important for coactivator binding region; sequence KWAK. Positions 192 and 320 each coordinate 21-hydroxyprogesterone. Residues Arg192 and Thr320 each coordinate aldosterone. The progesterone site is built by Arg192 and Thr320.

This sequence belongs to the nuclear hormone receptor family. NR3 subfamily.

The protein localises to the cytoplasm. The protein resides in the nucleus. Its function is as follows. Receptor for both mineralocorticoids (MC) such as cortisol. Binds to mineralocorticoid response elements (MRE) and transactivates target genes. The effect of MC is to increase ion and water transport and thus raise extracellular fluid volume and blood pressure and lower potassium levels. The polypeptide is Mineralocorticoid receptor (nr3c2) (Oncorhynchus mykiss (Rainbow trout)).